The following is a 348-amino-acid chain: 4-hydroxyphenylpyruvate dioxygenase (348 aa).

2 VOC domains span residues 11 to 141 (GFAF…ITSS) and 151 to 303 (AIDH…IFTE). Residues His-154, His-232, and Glu-312 each coordinate Fe cation.

This sequence belongs to the 4HPPD family. Fe cation is required as a cofactor.

The catalysed reaction is 3-(4-hydroxyphenyl)pyruvate + O2 = homogentisate + CO2. Its function is as follows. Catalyzes the transformation of p-hydroxyphenylpyruvate into HGA. Has hemolytic and brown pigment production activity. This is 4-hydroxyphenylpyruvate dioxygenase (lly) from Legionella pneumophila (strain Corby).